The primary structure comprises 222 residues: Deoxyribose-phosphate aldolase (222 aa).

Asp-92 acts as the Proton donor/acceptor in catalysis. The active-site Schiff-base intermediate with acetaldehyde is the Lys-156. Residue Lys-185 is the Proton donor/acceptor of the active site.

The protein belongs to the DeoC/FbaB aldolase family. DeoC type 1 subfamily. As to quaternary structure, homodimer.

Its subcellular location is the cytoplasm. The catalysed reaction is 2-deoxy-D-ribose 5-phosphate = D-glyceraldehyde 3-phosphate + acetaldehyde. It functions in the pathway carbohydrate degradation; 2-deoxy-D-ribose 1-phosphate degradation; D-glyceraldehyde 3-phosphate and acetaldehyde from 2-deoxy-alpha-D-ribose 1-phosphate: step 2/2. Its activity is regulated as follows. Shows high stability to high concentrations of acetaldehyde. Functionally, catalyzes a reversible aldol reaction between acetaldehyde and D-glyceraldehyde 3-phosphate to generate 2-deoxy-D-ribose 5-phosphate. The polypeptide is Deoxyribose-phosphate aldolase (Aciduliprofundum boonei (strain DSM 19572 / T469)).